Reading from the N-terminus, the 344-residue chain is Phosphoribosylformylglycinamidine cyclo-ligase (344 aa).

It belongs to the AIR synthase family.

It is found in the cytoplasm. It catalyses the reaction 2-formamido-N(1)-(5-O-phospho-beta-D-ribosyl)acetamidine + ATP = 5-amino-1-(5-phospho-beta-D-ribosyl)imidazole + ADP + phosphate + H(+). Its pathway is purine metabolism; IMP biosynthesis via de novo pathway; 5-amino-1-(5-phospho-D-ribosyl)imidazole from N(2)-formyl-N(1)-(5-phospho-D-ribosyl)glycinamide: step 2/2. In Anaeromyxobacter sp. (strain Fw109-5), this protein is Phosphoribosylformylglycinamidine cyclo-ligase.